Consider the following 622-residue polypeptide: WD repeat-containing protein 48 (622 aa).

Tyr-28 bears the Phosphotyrosine mark. WD repeat units lie at residues 28-67 (YNRN…QDPY), 73-112 (HHTD…CMST), 115-154 (THKD…ALTA), 166-205 (GNKD…KLMK), 208-247 (GHTD…CIAT), 250-289 (VHDE…IRVL), 292-334 (EEKA…NFRA), and 358-397 (KGGA…GFSS). Lys-214 bears the N6-acetyllysine mark. Position 523 is an N6-acetyllysine (Lys-523). Positions 552-573 (LDNESQTTSSSNNEKPGEQEKE) are disordered. Positions 554 to 565 (NESQTTSSSNNE) are enriched in low complexity. Thr-558 carries the post-translational modification Phosphothreonine.

The protein belongs to the WD repeat WDR48 family. Interacts with USP46. Interacts with USP1. Interacts with USP12. Component of the USP12-WDR20-WDR48 deubiquitinating complex. Component of the USP12-DMWD-WDR48 deubiquitinating complex. Interacts with PHLPP1. Interacts with RAD51AP1; the interaction is direct and promotes formation of a trimeric complex with RAD51 via RAD51AP1. Interacts with ATAD5; the interaction regulates USP1-mediated PCNA deubiquitination. Interacts with RAD51; the interaction is enhanced under replication stress. Interacts with ITCH; the interaction is more efficient when both USP12 and WDR48/UAF1 are involved and may facilitate recruitment of the USP12 deubiquitinating complex to Notch.

Its subcellular location is the nucleus. It localises to the cytoplasm. It is found in the lysosome. The protein resides in the late endosome. Regulator of deubiquitinating complexes, which acts as a strong activator of USP1, USP12 and USP46. Enhances the USP1-mediated deubiquitination of FANCD2; USP1 being almost inactive by itself. Activates deubiquitination by increasing the catalytic turnover without increasing the affinity of deubiquitinating enzymes for the substrate. Also activates deubiquitinating activity of complexes containing USP12. Docks at the distal end of the USP12 fingers domain and induces a cascade of structural changes leading to the activation of the enzyme. Together with RAD51AP1, promotes DNA repair by stimulating RAD51-mediated homologous recombination. Binds single-stranded DNA (ssDNA) and double-stranded DNA (dsDNA). DNA-binding is required both for USP1-mediated deubiquitination of FANCD2 and stimulation of RAD51-mediated homologous recombination: both WDR48/UAF1 and RAD51AP1 have coordinated role in DNA-binding during these processes. Together with ATAD5 and by regulating USP1 activity, has a role in PCNA-mediated translesion synthesis (TLS) by deubiquitinating monoubiquitinated PCNA. Together with ATAD5, has a role in recruiting RAD51 to stalled forks during replication stress. The chain is WD repeat-containing protein 48 (WDR48) from Macaca fascicularis (Crab-eating macaque).